The following is a 542-amino-acid chain: CTP synthase (542 aa).

The tract at residues 1 to 265 (MARYVFITGG…DSEVLSAFGI (265 aa)) is amidoligase domain. S13 serves as a coordination point for CTP. A UTP-binding site is contributed by S13. 14-19 (SLGKGI) lines the ATP pocket. Y54 contacts L-glutamine. D71 is a binding site for ATP. Positions 71 and 139 each coordinate Mg(2+). CTP is bound by residues 146 to 148 (DIE), 186 to 191 (KTKPTQ), and K222. Residues 186–191 (KTKPTQ) and K222 each bind UTP. The Glutamine amidotransferase type-1 domain occupies 291–541 (TIAVVGKYTG…IEAAIEQSRL (251 aa)). G353 is a binding site for L-glutamine. The active-site Nucleophile; for glutamine hydrolysis is C380. Residues 381 to 384 (FGMQ), E404, and R469 each bind L-glutamine. Active-site residues include H514 and E516.

Belongs to the CTP synthase family. Homotetramer.

The catalysed reaction is UTP + L-glutamine + ATP + H2O = CTP + L-glutamate + ADP + phosphate + 2 H(+). The enzyme catalyses L-glutamine + H2O = L-glutamate + NH4(+). It catalyses the reaction UTP + NH4(+) + ATP = CTP + ADP + phosphate + 2 H(+). Its pathway is pyrimidine metabolism; CTP biosynthesis via de novo pathway; CTP from UDP: step 2/2. Allosterically activated by GTP, when glutamine is the substrate; GTP has no effect on the reaction when ammonia is the substrate. The allosteric effector GTP functions by stabilizing the protein conformation that binds the tetrahedral intermediate(s) formed during glutamine hydrolysis. Inhibited by the product CTP, via allosteric rather than competitive inhibition. In terms of biological role, catalyzes the ATP-dependent amination of UTP to CTP with either L-glutamine or ammonia as the source of nitrogen. Regulates intracellular CTP levels through interactions with the four ribonucleotide triphosphates. In Brucella melitensis biotype 1 (strain ATCC 23456 / CCUG 17765 / NCTC 10094 / 16M), this protein is CTP synthase.